The primary structure comprises 562 residues: Zinc finger protein 579 (562 aa).

Residues 1–11 are compositionally biased toward pro residues; sequence MDPQPPPPAQG. The disordered stretch occupies residues 1-45; it reads MDPQPPPPAQGSPPHRDRGRGRGRGRGRGRGRGRGRGGAGAPRAP. Residues 17 to 35 are compositionally biased toward basic residues; it reads DRGRGRGRGRGRGRGRGRG. C2H2-type zinc fingers lie at residues 46–68, 74–96, and 102–125; these read LPCP…RLSH, HACP…LRGH, and LRCA…AQEH. Arg94 carries the post-translational modification Omega-N-methylarginine. 2 disordered regions span residues 120 to 154 and 166 to 199; these read HLAQ…EGVE and EEAT…AEAG. The span at 187–197 shows a compositional bias: basic and acidic residues; the sequence is DPRESEAKEAE. Residue Ser191 is modified to Phosphoserine. 2 C2H2-type zinc fingers span residues 267–289 and 295–317; these read HQCS…RLVH and FVCP…RRVH. The tract at residues 321-377 is disordered; sequence SLLAPLPGAGKKDDKASGGRNSGKGPEGGEGAECGGASEGGEGGHNGGDATPARPPA. The segment covering 340–367 has biased composition (gly residues); that stretch reads RNSGKGPEGGEGAECGGASEGGEGGHNG. C2H2-type zinc fingers lie at residues 382-404, 410-432, and 439-461; these read FWCP…GVTH, FQCV…AQVH, and HPCP…QRCH. The residue at position 486 (Ser486) is a Phosphoserine. The tract at residues 505-530 is disordered; it reads AHIKEEPPSPGTPPQSPPAPPVFLSA. Residues 512 to 525 show a composition bias toward pro residues; that stretch reads PSPGTPPQSPPAPP.

Belongs to the krueppel C2H2-type zinc-finger protein family.

Its subcellular location is the nucleus. Its function is as follows. May be involved in transcriptional regulation. This Mus musculus (Mouse) protein is Zinc finger protein 579 (Znf579).